Here is a 357-residue protein sequence, read N- to C-terminus: 3-isopropylmalate dehydrogenase (357 aa).

Substrate is bound by residues Arg-97, Arg-107, Arg-135, and Asp-224. Mg(2+) is bound by residues Asp-224, Asp-248, and Asp-252. NAD(+) is bound at residue 282–294; that stretch reads GSAPDIAGKNIAN.

Belongs to the isocitrate and isopropylmalate dehydrogenases family. LeuB type 1 subfamily. As to quaternary structure, homodimer. Requires Mg(2+) as cofactor. Mn(2+) is required as a cofactor.

The protein resides in the cytoplasm. The catalysed reaction is (2R,3S)-3-isopropylmalate + NAD(+) = 4-methyl-2-oxopentanoate + CO2 + NADH. Its pathway is amino-acid biosynthesis; L-leucine biosynthesis; L-leucine from 3-methyl-2-oxobutanoate: step 3/4. Its function is as follows. Catalyzes the oxidation of 3-carboxy-2-hydroxy-4-methylpentanoate (3-isopropylmalate) to 3-carboxy-4-methyl-2-oxopentanoate. The product decarboxylates to 4-methyl-2 oxopentanoate. This Prochlorococcus marinus subsp. pastoris (strain CCMP1986 / NIES-2087 / MED4) protein is 3-isopropylmalate dehydrogenase.